The sequence spans 418 residues: Histidinol dehydrogenase (418 aa).

Tyrosine 119, glutamine 180, and asparagine 203 together coordinate NAD(+). Residues threonine 226, glutamine 248, and histidine 251 each coordinate substrate. Zn(2+)-binding residues include glutamine 248 and histidine 251. Active-site proton acceptor residues include glutamate 316 and histidine 317. Substrate is bound by residues histidine 317, aspartate 350, glutamate 404, and histidine 409. Aspartate 350 lines the Zn(2+) pocket. Histidine 409 contacts Zn(2+).

It belongs to the histidinol dehydrogenase family. It depends on Zn(2+) as a cofactor.

The catalysed reaction is L-histidinol + 2 NAD(+) + H2O = L-histidine + 2 NADH + 3 H(+). The protein operates within amino-acid biosynthesis; L-histidine biosynthesis; L-histidine from 5-phospho-alpha-D-ribose 1-diphosphate: step 9/9. Catalyzes the sequential NAD-dependent oxidations of L-histidinol to L-histidinaldehyde and then to L-histidine. The chain is Histidinol dehydrogenase from Staphylococcus aureus (strain MRSA252).